The following is a 106-amino-acid chain: Circadian clock oscillator protein KaiB (106 aa).

Belongs to the KaiB family. As to quaternary structure, the KaiABC complex composition changes during the circadian cycle to control KaiC phosphorylation. Complexes KaiC(6), KaiA(2-4):KaiC(6), KaiB(6):KaiC(6) and KaiC(6):KaiB(6):KaiA(12) are among the most important forms, many form cooperatively. Undergoes a major conformational rearrangment; in the free state forms homotetramers as a dimer of dimers. When bound to the CI domain of KaiC switches to a monomeric thioredoxin-fold (KaiB(fs)). KaiB(fs) binds CikA, leading it to dephosphorylate phospho-RpaA.

Key component of the KaiABC oscillator complex, which constitutes the main circadian regulator in cyanobacteria. Complex composition changes during the circadian cycle to control KaiC phosphorylation. KaiA stimulates KaiC autophosphorylation, while KaiB sequesters KaiA, leading to KaiC autodephosphorylation. Phospho-Ser-431 KaiC accumulation triggers binding of KaiB to form the KaiB(6):KaiC(6) complex, leading to changes in output regulators CikA and SasA. KaiB switches to a thioredoxin-like fold (KaiB(fs)) when bound to KaiC. KaiB(6):KaiC(6) formation exposes a site for KaiA binding that sequesters KaiA from KaiC, making the KaiC(6):KaiB(6):KaiA(12) complex that results in KaiC autodephosphorylation. Functionally, a metamorphic protein which reversibly switches between an inactive tetrameric fold and a rare, thioredoxin-like monomeric fold (KaiB(fs)). KaiB(fs) binds phospho-KaiC, KaiA and CikA. KaiA and CikA compete for binding to KaiB(fs), and KaiB(fs) and SasA compete for binding to KaiC, thus the clock oscillator and output signal pathway are tightly coupled. This is Circadian clock oscillator protein KaiB from Gloeothece citriformis (strain PCC 7424) (Cyanothece sp. (strain PCC 7424)).